Consider the following 149-residue polypeptide: Transcriptional repressor NrdR (149 aa).

A zinc finger spans residues 3-34; it reads CPFCSAVDTKVIDSRLVGEGSSVRRRRQCLVC. Residues 49–139 form the ATP-cone domain; that stretch reads PRVVKSNDVR…VYRSFEDIKE (91 aa).

Belongs to the NrdR family. The cofactor is Zn(2+).

Negatively regulates transcription of bacterial ribonucleotide reductase nrd genes and operons by binding to NrdR-boxes. In Enterobacter sp. (strain 638), this protein is Transcriptional repressor NrdR.